A 535-amino-acid chain; its full sequence is GMP synthase [glutamine-hydrolyzing] (535 aa).

One can recognise a Glutamine amidotransferase type-1 domain in the interval 24–217 (KILIVDFGSQ…VRKVAGLTGD (194 aa)). The active-site Nucleophile is the C101. Residues H191 and E193 contribute to the active site. Positions 218–410 (WTMRAFREEA…LGLPEIFVGR (193 aa)) constitute a GMPS ATP-PPase domain. ATP is bound at residue 245–251 (SGGVDSS).

In terms of assembly, homodimer.

The enzyme catalyses XMP + L-glutamine + ATP + H2O = GMP + L-glutamate + AMP + diphosphate + 2 H(+). Its pathway is purine metabolism; GMP biosynthesis; GMP from XMP (L-Gln route): step 1/1. In terms of biological role, catalyzes the synthesis of GMP from XMP. This chain is GMP synthase [glutamine-hydrolyzing], found in Nitrobacter winogradskyi (strain ATCC 25391 / DSM 10237 / CIP 104748 / NCIMB 11846 / Nb-255).